The following is a 56-amino-acid chain: Cecropin-A2 (56 aa).

Residue Arg55 is modified to Arginine amide.

Belongs to the cecropin family.

It is found in the secreted. Functionally, cecropins have lytic and antibacterial activity against several Gram-positive and Gram-negative bacteria. The polypeptide is Cecropin-A2 (CecA2) (Drosophila yakuba (Fruit fly)).